Here is a 180-residue protein sequence, read N- to C-terminus: Meiotic recombination protein rec15 (180 aa).

As to quaternary structure, homomer. Interacts (via C-terminus) with hop1 (via C-terminus); the interaction is direct. Interacts (via C-terminus) with rec10; the interaction is direct. Interacts with mde2; the interaction is direct.

The protein localises to the nucleus. It is found in the chromosome. In terms of biological role, required during the early stages of meiosis for meiotic recombination. This is Meiotic recombination protein rec15 from Schizosaccharomyces pombe (strain 972 / ATCC 24843) (Fission yeast).